Consider the following 419-residue polypeptide: Septin-2 (419 aa).

The region spanning N40–Q306 is the Septin-type G domain. Residues G50–S57 are G1 motif. Residues G50–S57, S79, G105, K186–E194, G240, and R255 contribute to the GTP site. Positions D102–G105 are G3 motif. A G4 motif region spans residues A185 to D188. Residues W259–H269 are important for dimerization.

This sequence belongs to the TRAFAC class TrmE-Era-EngA-EngB-Septin-like GTPase superfamily. Septin GTPase family. In terms of assembly, may assemble into a multicomponent structure.

It is found in the cytoplasm. The protein resides in the cytoskeleton. The protein localises to the spindle. Involved in cytokinesis. The sequence is that of Septin-2 from Drosophila melanogaster (Fruit fly).